We begin with the raw amino-acid sequence, 443 residues long: Palmitoyltransferase pfa5 (443 aa).

Transmembrane regions (helical) follow at residues I17 to L37 and A57 to L77. The segment at C96 to V137 is disordered. Residues K107–S123 are compositionally biased toward basic residues. The span at K124–V137 shows a compositional bias: basic and acidic residues. The region spanning V175 to V225 is the DHHC domain. 2 helical membrane-spanning segments follow: residues F220–I240 and W256–S276. The interval A410–N443 is disordered.

This sequence belongs to the DHHC palmitoyltransferase family. PFA5 subfamily. Autopalmitoylated.

The protein localises to the membrane. The catalysed reaction is L-cysteinyl-[protein] + hexadecanoyl-CoA = S-hexadecanoyl-L-cysteinyl-[protein] + CoA. The polypeptide is Palmitoyltransferase pfa5 (pfa5) (Aspergillus fumigatus (strain ATCC MYA-4609 / CBS 101355 / FGSC A1100 / Af293) (Neosartorya fumigata)).